The primary structure comprises 424 residues: Endochitinase 1 (424 aa).

A signal peptide spans 1–22 (MPSLFAQSLAIIATLQATLGLA). Positions 39 to 402 (YVNAVYFTNW…GTSSNKLGGP (364 aa)) constitute a GH18 domain. 3 N-linked (GlcNAc...) asparagine glycosylation sites follow: asparagine 74, asparagine 78, and asparagine 96. Chitin is bound by residues 103 to 104 (GN) and 130 to 133 (GGWT). The Proton donor role is filled by glutamate 172. Residues tyrosine 173 and 238 to 241 (MAYD) each bind chitin. Residues asparagine 248 and asparagine 347 are each glycosylated (N-linked (GlcNAc...) asparagine). Tryptophan 379 contacts chitin. A disordered region spans residues 385–412 (RQGPDSLIGTSSNKLGGPDTTENLLNYP). Residues 392–408 (IGTSSNKLGGPDTTENL) are compositionally biased toward polar residues.

The protein belongs to the glycosyl hydrolase 18 family. Chitinase class V subfamily.

The protein localises to the secreted. The enzyme catalyses Random endo-hydrolysis of N-acetyl-beta-D-glucosaminide (1-&gt;4)-beta-linkages in chitin and chitodextrins.. Functionally, secreted chitinase involved in the degradation of chitin, a component of the cell walls of fungi and exoskeletal elements of some animals (including worms and arthropods). Participates in the infection process and directly acts in the penetration process of the host cuticle. This chain is Endochitinase 1 (chit1), found in Metarhizium robertsii (strain ARSEF 23 / ATCC MYA-3075) (Metarhizium anisopliae (strain ARSEF 23)).